The primary structure comprises 230 residues: 2,3-bisphosphoglycerate-dependent phosphoglycerate mutase (230 aa).

Residues 10–17 (RHGESKWN), 23–24 (TG), R62, 89–92 (ERNY), K100, 116–117 (RR), and 185–186 (GN) each bind substrate. The active-site Tele-phosphohistidine intermediate is H11. Catalysis depends on E89, which acts as the Proton donor/acceptor.

Belongs to the phosphoglycerate mutase family. BPG-dependent PGAM subfamily. As to quaternary structure, homodimer.

It carries out the reaction (2R)-2-phosphoglycerate = (2R)-3-phosphoglycerate. It participates in carbohydrate degradation; glycolysis; pyruvate from D-glyceraldehyde 3-phosphate: step 3/5. Its function is as follows. Catalyzes the interconversion of 2-phosphoglycerate and 3-phosphoglycerate. In Buchnera aphidicola subsp. Cinara cedri (strain Cc), this protein is 2,3-bisphosphoglycerate-dependent phosphoglycerate mutase.